A 264-amino-acid chain; its full sequence is Dehydrodolichyl diphosphate synthase complex subunit SPAC4D7.04c (264 aa).

The protein belongs to the UPP synthase family. As to quaternary structure, forms an active dehydrodolichyl diphosphate synthase complex with nus1. Requires Mg(2+) as cofactor.

The protein localises to the endoplasmic reticulum membrane. It carries out the reaction n isopentenyl diphosphate + (2E,6E)-farnesyl diphosphate = a di-trans,poly-cis-polyprenyl diphosphate + n diphosphate. It functions in the pathway protein modification; protein glycosylation. In terms of biological role, with nus1, forms the dehydrodolichyl diphosphate synthase (DDS) complex, an essential component of the dolichol monophosphate (Dol-P) biosynthetic machinery. Adds multiple copies of isopentenyl pyrophosphate (IPP) to farnesyl pyrophosphate (FPP) to produce dehydrodolichyl diphosphate (Dedol-PP), a precursor of dolichol which is utilized as a sugar carrier in protein glycosylation in the endoplasmic reticulum (ER). In Schizosaccharomyces pombe (strain 972 / ATCC 24843) (Fission yeast), this protein is Dehydrodolichyl diphosphate synthase complex subunit SPAC4D7.04c.